A 98-amino-acid chain; its full sequence is Large ribosomal subunit protein uL23 (98 aa).

This sequence belongs to the universal ribosomal protein uL23 family. In terms of assembly, part of the 50S ribosomal subunit. Contacts protein L29, and trigger factor when it is bound to the ribosome.

In terms of biological role, one of the early assembly proteins it binds 23S rRNA. One of the proteins that surrounds the polypeptide exit tunnel on the outside of the ribosome. Forms the main docking site for trigger factor binding to the ribosome. The protein is Large ribosomal subunit protein uL23 of Nitrobacter winogradskyi (strain ATCC 25391 / DSM 10237 / CIP 104748 / NCIMB 11846 / Nb-255).